Reading from the N-terminus, the 341-residue chain is Ribosomal RNA small subunit methyltransferase H (341 aa).

Residues 47-49 (GGY), aspartate 64, phenylalanine 97, aspartate 109, and glutamine 116 contribute to the S-adenosyl-L-methionine site.

Belongs to the methyltransferase superfamily. RsmH family.

The protein localises to the cytoplasm. It catalyses the reaction cytidine(1402) in 16S rRNA + S-adenosyl-L-methionine = N(4)-methylcytidine(1402) in 16S rRNA + S-adenosyl-L-homocysteine + H(+). Specifically methylates the N4 position of cytidine in position 1402 (C1402) of 16S rRNA. This Allorhizobium ampelinum (strain ATCC BAA-846 / DSM 112012 / S4) (Agrobacterium vitis (strain S4)) protein is Ribosomal RNA small subunit methyltransferase H.